A 364-amino-acid chain; its full sequence is tRNA-specific 2-thiouridylase MnmA (364 aa).

ATP is bound by residues 6–13 (AMSGGVDS) and Leu-32. Cys-101 (nucleophile) is an active-site residue. Residues Cys-101 and Cys-193 are joined by a disulfide bond. Gly-125 contacts ATP. The interaction with tRNA stretch occupies residues 143 to 145 (KDQ). The active-site Cysteine persulfide intermediate is Cys-193.

It belongs to the MnmA/TRMU family.

The protein localises to the cytoplasm. The enzyme catalyses S-sulfanyl-L-cysteinyl-[protein] + uridine(34) in tRNA + AH2 + ATP = 2-thiouridine(34) in tRNA + L-cysteinyl-[protein] + A + AMP + diphosphate + H(+). Functionally, catalyzes the 2-thiolation of uridine at the wobble position (U34) of tRNA, leading to the formation of s(2)U34. This chain is tRNA-specific 2-thiouridylase MnmA, found in Rhodococcus jostii (strain RHA1).